We begin with the raw amino-acid sequence, 241 residues long: Small ribosomal subunit protein uS2 (241 aa).

This sequence belongs to the universal ribosomal protein uS2 family.

The sequence is that of Small ribosomal subunit protein uS2 from Photorhabdus laumondii subsp. laumondii (strain DSM 15139 / CIP 105565 / TT01) (Photorhabdus luminescens subsp. laumondii).